Reading from the N-terminus, the 147-residue chain is Large ribosomal subunit protein uL13 (147 aa).

It belongs to the universal ribosomal protein uL13 family. Part of the 50S ribosomal subunit.

Functionally, this protein is one of the early assembly proteins of the 50S ribosomal subunit, although it is not seen to bind rRNA by itself. It is important during the early stages of 50S assembly. The protein is Large ribosomal subunit protein uL13 of Nocardioides sp. (strain ATCC BAA-499 / JS614).